The following is a 117-amino-acid chain: UPF0127 protein PYRAB11210 (117 aa).

Belongs to the UPF0127 family.

This is UPF0127 protein PYRAB11210 from Pyrococcus abyssi (strain GE5 / Orsay).